A 161-amino-acid polypeptide reads, in one-letter code: N5-carboxyaminoimidazole ribonucleotide mutase (161 aa).

The substrate site is built by Ser-9, Asp-12, and Arg-39.

This sequence belongs to the AIR carboxylase family. Class I subfamily.

It catalyses the reaction 5-carboxyamino-1-(5-phospho-D-ribosyl)imidazole + H(+) = 5-amino-1-(5-phospho-D-ribosyl)imidazole-4-carboxylate. The protein operates within purine metabolism; IMP biosynthesis via de novo pathway; 5-amino-1-(5-phospho-D-ribosyl)imidazole-4-carboxylate from 5-amino-1-(5-phospho-D-ribosyl)imidazole (N5-CAIR route): step 2/2. Its function is as follows. Catalyzes the conversion of N5-carboxyaminoimidazole ribonucleotide (N5-CAIR) to 4-carboxy-5-aminoimidazole ribonucleotide (CAIR). The chain is N5-carboxyaminoimidazole ribonucleotide mutase from Aliivibrio fischeri (strain ATCC 700601 / ES114) (Vibrio fischeri).